The sequence spans 271 residues: Aminoglycoside 3'-phosphotransferase (271 aa).

The active-site Proton acceptor is the D198.

Belongs to the aminoglycoside phosphotransferase family.

It catalyses the reaction kanamycin A + ATP = kanamycin 3'-phosphate + ADP + H(+). Its function is as follows. Resistance to kanamycin and structurally-related aminoglycosides, including amikacin. The protein is Aminoglycoside 3'-phosphotransferase (aphA1) of Escherichia coli.